Reading from the N-terminus, the 318-residue chain is HPr kinase/phosphorylase (318 aa).

Residues histidine 143 and lysine 164 contribute to the active site. 158–165 (GKSGVGKS) contributes to the ATP binding site. Mg(2+) is bound at residue serine 165. Aspartate 182 serves as the catalytic Proton acceptor; for phosphorylation activity. Proton donor; for dephosphorylation activity. The tract at residues 206–215 (MEIRGLGILN) is important for the catalytic mechanism of both phosphorylation and dephosphorylation. A Mg(2+)-binding site is contributed by glutamate 207. Arginine 248 is an active-site residue. The segment at 269 to 274 (PVKPGR) is important for the catalytic mechanism of dephosphorylation.

The protein belongs to the HPrK/P family. Homohexamer. The cofactor is Mg(2+).

It catalyses the reaction [HPr protein]-L-serine + ATP = [HPr protein]-O-phospho-L-serine + ADP + H(+). It carries out the reaction [HPr protein]-O-phospho-L-serine + phosphate + H(+) = [HPr protein]-L-serine + diphosphate. Its function is as follows. Catalyzes the ATP- as well as the pyrophosphate-dependent phosphorylation of a specific serine residue in HPr, a phosphocarrier protein of the phosphoenolpyruvate-dependent sugar phosphotransferase system (PTS). HprK/P also catalyzes the pyrophosphate-producing, inorganic phosphate-dependent dephosphorylation (phosphorolysis) of seryl-phosphorylated HPr (P-Ser-HPr). This is HPr kinase/phosphorylase from Leptospira borgpetersenii serovar Hardjo-bovis (strain JB197).